The primary structure comprises 242 residues: E3 ubiquitin-protein ligase AIRP2 (242 aa).

The RING-type zinc-finger motif lies at 146-184 (CGICLEIRNKVVLPTCNHSMCINCYRNWRARSQSCPFCR).

In terms of assembly, interacts with ATP1/SDIRIP1. Expressed in germinating seeds, flower organs and siliques.

Its subcellular location is the cytoplasm. It is found in the cytosol. It carries out the reaction S-ubiquitinyl-[E2 ubiquitin-conjugating enzyme]-L-cysteine + [acceptor protein]-L-lysine = [E2 ubiquitin-conjugating enzyme]-L-cysteine + N(6)-ubiquitinyl-[acceptor protein]-L-lysine.. Possesses E3 ubiquitin-protein ligase activity in vitro when associated with the E2 enzyme UBC8 in vitro. Plays combinatory roles with AIRP1 in the positive regulation of the abscisic acid-mediated drought stress response. Plays a positive role in abscisic acid- and high salinity-regulated seed germination through the ubiquitin-proteasome-dependent down-regulation of ATP1/SDIRIP1. This is E3 ubiquitin-protein ligase AIRP2 from Arabidopsis thaliana (Mouse-ear cress).